The primary structure comprises 50 residues: Temporin-SHb (50 aa).

A signal peptide spans 1-10 (FLGTINLSLC). A propeptide spanning residues 11 to 35 (EQERDADEEERRDEPDESDVEVEKR) is cleaved from the precursor. The segment at 12–31 (QERDADEEERRDEPDESDVE) is disordered. The segment covering 14-30 (RDADEEERRDEPDESDV) has biased composition (acidic residues). Leu48 is subject to Leucine amide.

It belongs to the frog skin active peptide (FSAP) family. Temporin subfamily. As to expression, expressed by the skin glands.

It is found in the secreted. Its function is as follows. Amphipathic alpha-helical peptide with no antimicrobial activity. Does not display anti-leishmania activity. Does not show hemolytic activity (LC(50)&gt;116 uM). This is Temporin-SHb from Pelophylax saharicus (Sahara frog).